The sequence spans 31 residues: MSILIGYIILLACAFGLAAGLFFGLSLIKLI.

A helical membrane pass occupies residues 3–23 (ILIGYIILLACAFGLAAGLFF).

Belongs to the PetL family. In terms of assembly, the 4 large subunits of the cytochrome b6-f complex are cytochrome b6, subunit IV (17 kDa polypeptide, PetD), cytochrome f and the Rieske protein, while the 4 small subunits are PetG, PetL, PetM and PetN. The complex functions as a dimer.

The protein resides in the plastid. It localises to the chloroplast thylakoid membrane. Its function is as follows. Component of the cytochrome b6-f complex, which mediates electron transfer between photosystem II (PSII) and photosystem I (PSI), cyclic electron flow around PSI, and state transitions. PetL is important for photoautotrophic growth as well as for electron transfer efficiency and stability of the cytochrome b6-f complex. This Rhodomonas salina (Cryptomonas salina) protein is Cytochrome b6-f complex subunit 6.